The following is a 692-amino-acid chain: UvrABC system protein B (692 aa).

The region spanning 32-187 is the Helicase ATP-binding domain; it reads ENIENGEKAQ…LLNDLVGIQF (156 aa). ATP is bound at residue 45–52; sequence GATGTGKT. The short motif at 98-121 is the Beta-hairpin element; sequence YYDYYQPEAYVPSSDTYIEKDSSV. Residues 436 to 631 enclose the Helicase C-terminal domain; that stretch reads QIDDLVGEIH…TIKKEIRDLI (196 aa). The UVR domain maps to 656–691; sequence KALVKKLEKEMQQAAAALDFEGAAQLRDMVLELRAM.

Belongs to the UvrB family. As to quaternary structure, forms a heterotetramer with UvrA during the search for lesions. Interacts with UvrC in an incision complex.

Its subcellular location is the cytoplasm. In terms of biological role, the UvrABC repair system catalyzes the recognition and processing of DNA lesions. A damage recognition complex composed of 2 UvrA and 2 UvrB subunits scans DNA for abnormalities. Upon binding of the UvrA(2)B(2) complex to a putative damaged site, the DNA wraps around one UvrB monomer. DNA wrap is dependent on ATP binding by UvrB and probably causes local melting of the DNA helix, facilitating insertion of UvrB beta-hairpin between the DNA strands. Then UvrB probes one DNA strand for the presence of a lesion. If a lesion is found the UvrA subunits dissociate and the UvrB-DNA preincision complex is formed. This complex is subsequently bound by UvrC and the second UvrB is released. If no lesion is found, the DNA wraps around the other UvrB subunit that will check the other stand for damage. The polypeptide is UvrABC system protein B (Lactococcus lactis subsp. cremoris (strain MG1363)).